The chain runs to 848 residues: Paramyosin (848 aa).

The nonhelical region stretch occupies residues 1–9 (AFGSMSVAD). Positions 10–833 (LGSLTRLEDK…HLIRAKHRSS (824 aa)) form a coiled coil. Residues 834–848 (VVTGKNASASKIYVL) are nonhelical region.

The protein belongs to the paramyosin family. In terms of assembly, homodimer.

Its subcellular location is the cytoplasm. It is found in the myofibril. Paramyosin is a major structural component of many thick filaments isolated from invertebrate muscles. The sequence is that of Paramyosin from Dirofilaria immitis (Canine heartworm).